The sequence spans 339 residues: Ketol-acid reductoisomerase (NADP(+)) (339 aa).

Residues 1-182 (MRVYYDRDAD…GGGRSGIIET (182 aa)) enclose the KARI N-terminal Rossmann domain. Residues 24-27 (YGSQ), Lys48, Ser51, Thr53, and 83-86 (DELQ) each bind NADP(+). The active site involves His108. Gly134 provides a ligand contact to NADP(+). Residues 183 to 328 (NFREECETDL…AKLRGMMPWI (146 aa)) form the KARI C-terminal knotted domain. Mg(2+) is bound by residues Asp191, Glu195, Glu227, and Glu231. Residue Ser252 coordinates substrate.

This sequence belongs to the ketol-acid reductoisomerase family. The cofactor is Mg(2+).

The catalysed reaction is (2R)-2,3-dihydroxy-3-methylbutanoate + NADP(+) = (2S)-2-acetolactate + NADPH + H(+). It carries out the reaction (2R,3R)-2,3-dihydroxy-3-methylpentanoate + NADP(+) = (S)-2-ethyl-2-hydroxy-3-oxobutanoate + NADPH + H(+). It participates in amino-acid biosynthesis; L-isoleucine biosynthesis; L-isoleucine from 2-oxobutanoate: step 2/4. The protein operates within amino-acid biosynthesis; L-valine biosynthesis; L-valine from pyruvate: step 2/4. In terms of biological role, involved in the biosynthesis of branched-chain amino acids (BCAA). Catalyzes an alkyl-migration followed by a ketol-acid reduction of (S)-2-acetolactate (S2AL) to yield (R)-2,3-dihydroxy-isovalerate. In the isomerase reaction, S2AL is rearranged via a Mg-dependent methyl migration to produce 3-hydroxy-3-methyl-2-ketobutyrate (HMKB). In the reductase reaction, this 2-ketoacid undergoes a metal-dependent reduction by NADPH to yield (R)-2,3-dihydroxy-isovalerate. This is Ketol-acid reductoisomerase (NADP(+)) from Rhizobium etli (strain ATCC 51251 / DSM 11541 / JCM 21823 / NBRC 15573 / CFN 42).